The primary structure comprises 548 residues: Putative malate oxidoreductase [NAD] (548 aa).

The active-site Proton donor is Y96. The active-site Proton acceptor is K169. The a divalent metal cation site is built by E240, D241, and D264. NAD(+) contacts are provided by residues 297-300 (AGTA), N410, and N455.

Belongs to the malic enzymes family. Mg(2+) serves as cofactor. Requires Mn(2+) as cofactor.

The enzyme catalyses (S)-malate + NAD(+) = pyruvate + CO2 + NADH. It catalyses the reaction oxaloacetate + H(+) = pyruvate + CO2. In Mycobacterium tuberculosis (strain CDC 1551 / Oshkosh), this protein is Putative malate oxidoreductase [NAD] (mez).